The sequence spans 472 residues: 3-isopropylmalate dehydratase large subunit (472 aa).

The [4Fe-4S] cluster site is built by Cys347, Cys409, and Cys412.

It belongs to the aconitase/IPM isomerase family. LeuC type 1 subfamily. As to quaternary structure, heterodimer of LeuC and LeuD. Requires [4Fe-4S] cluster as cofactor.

The catalysed reaction is (2R,3S)-3-isopropylmalate = (2S)-2-isopropylmalate. The protein operates within amino-acid biosynthesis; L-leucine biosynthesis; L-leucine from 3-methyl-2-oxobutanoate: step 2/4. Catalyzes the isomerization between 2-isopropylmalate and 3-isopropylmalate, via the formation of 2-isopropylmaleate. In Salinibacter ruber (strain DSM 13855 / M31), this protein is 3-isopropylmalate dehydratase large subunit.